The chain runs to 149 residues: Ribonuclease pancreatic alpha-type (149 aa).

A signal peptide spans 1 to 25 (MGLEKSFILFSLLVLVLGWVQPSLG). The substrate site is built by Lys-32 and Arg-35. Catalysis depends on His-37, which acts as the Proton acceptor. Intrachain disulfides connect Cys-51–Cys-109, Cys-65–Cys-120, Cys-83–Cys-135, and Cys-90–Cys-97. Residues 66–70 (KPVNT), Lys-91, and Arg-110 contribute to the substrate site. His-144 (proton donor) is an active-site residue.

The protein belongs to the pancreatic ribonuclease family. Monomer.

The protein localises to the secreted. It catalyses the reaction an [RNA] containing cytidine + H2O = an [RNA]-3'-cytidine-3'-phosphate + a 5'-hydroxy-ribonucleotide-3'-[RNA].. The enzyme catalyses an [RNA] containing uridine + H2O = an [RNA]-3'-uridine-3'-phosphate + a 5'-hydroxy-ribonucleotide-3'-[RNA].. Its function is as follows. Endonuclease that catalyzes the cleavage of RNA on the 3' side of pyrimidine nucleotides. Acts on single-stranded and double-stranded RNA. This chain is Ribonuclease pancreatic alpha-type, found in Rattus fuscipes (Bush rat).